We begin with the raw amino-acid sequence, 366 residues long: Putative integrase/recombinase HI_1572 (366 aa).

The Core-binding (CB) domain occupies 54-133 (ITLDELIDKY…SLSALMAKTI (80 aa)). The 164-residue stretch at 168 to 331 (IFVSGYDVEH…DMAEGYKTKA (164 aa)) folds into the Tyr recombinase domain. Active-site residues include arginine 201, lysine 226, and histidine 308. Residue tyrosine 318 is the O-(3'-phospho-DNA)-tyrosine intermediate of the active site.

It belongs to the 'phage' integrase family.

This is Putative integrase/recombinase HI_1572 from Haemophilus influenzae (strain ATCC 51907 / DSM 11121 / KW20 / Rd).